A 164-amino-acid chain; its full sequence is 3-isopropylmalate dehydratase small subunit 1 (164 aa).

The protein belongs to the LeuD family. LeuD type 2 subfamily. As to quaternary structure, heterodimer of LeuC and LeuD.

It carries out the reaction (2R,3S)-3-isopropylmalate = (2S)-2-isopropylmalate. The protein operates within amino-acid biosynthesis; L-leucine biosynthesis; L-leucine from 3-methyl-2-oxobutanoate: step 2/4. In terms of biological role, catalyzes the isomerization between 2-isopropylmalate and 3-isopropylmalate, via the formation of 2-isopropylmaleate. The sequence is that of 3-isopropylmalate dehydratase small subunit 1 (leuD1) from Pyrococcus abyssi (strain GE5 / Orsay).